The sequence spans 724 residues: MEFGSFLVSLGTSFVIFVILMLLFTWLSRKSGNAPIYYPNRILKGLEPWEGTSLTRNPFAWMREALTSSEQDVVNLSGVDTAVHFVFLSTVLGIFACSSLLLLPTLLPLAATDNNIKNTKNATDTTSKGTFSQLDNLSMANITKKSSRLWAFLGAVYWISLVTYFFLWKAYKHVSSLRAQALMSADVKPEQFAILVRDMPAPPDGQTQKEFIDSYFREIYPETFYRSLVATENSKVNKIWEKLEGYKKKLARAEAILAATNNRPTNKTGFCGLVGKQVDSIEYYTELINESVAKLETEQKAVLAEKQQTAAVVFFTTRVAAASAAQSLHCQMVDKWTVTEAPEPRQLLWQNLNIKLFSRIIRQYFIYFFVAVTILFYMIPIAFVSAITTLKNLQRIIPFIKPVVEITAIRTVLESFLPQIALIVFLAMLPKLLLFLSKAEGIPSQSHAIRAASGKYFYFSVFNVFIGVTLAGTLFNTVKDIAKNPKLDMIINLLATSLPKSATFFLTYVALKFFIGYGLELSRIIPLIIFHLKKKYLCKTEAEVKEAWYPGDLSYATRVPGDMLILTITFCYSVIAPLILIFGITYFGLGWLVLRNQALKVYVPSYESYGRMWPHIHQRILAALFLFQVVMFGYLGAKTFFYTALVIPLIITSLIFGYVCRQKFYGGFEHTALEVACRELKQSPDLEEIFRAYIPHSLSSHKPEEHEFKGAMSRYQDFNAIAGV.

The Extracellular segment spans residues 1 to 4 (MEFG). Residues 5-25 (SFLVSLGTSFVIFVILMLLFT) traverse the membrane as a helical segment. At 26–85 (WLSRKSGNAPIYYPNRILKGLEPWEGTSLTRNPFAWMREALTSSEQDVVNLSGVDTAVHF) the chain is on the cytoplasmic side. Residues 86–108 (VFLSTVLGIFACSSLLLLPTLLP) traverse the membrane as a helical segment. Residues 109 to 147 (LAATDNNIKNTKNATDTTSKGTFSQLDNLSMANITKKSS) are Extracellular-facing. Residues 148–170 (RLWAFLGAVYWISLVTYFFLWKA) traverse the membrane as a helical segment. The Cytoplasmic segment spans residues 171 to 358 (YKHVSSLRAQ…WQNLNIKLFS (188 aa)). Residues 241–309 (EKLEGYKKKL…KAVLAEKQQT (69 aa)) are a coiled coil. The helical transmembrane segment at 359-385 (RIIRQYFIYFFVAVTILFYMIPIAFVS) threads the bilayer. At 386-411 (AITTLKNLQRIIPFIKPVVEITAIRT) the chain is on the extracellular side. The chain crosses the membrane as a helical span at residues 412–439 (VLESFLPQIALIVFLAMLPKLLLFLSKA). The Cytoplasmic segment spans residues 440 to 448 (EGIPSQSHA). Residues 449–472 (IRAASGKYFYFSVFNVFIGVTLAG) traverse the membrane as a helical segment. At 473 to 497 (TLFNTVKDIAKNPKLDMIINLLATS) the chain is on the extracellular side. The chain crosses the membrane as a helical span at residues 498-529 (LPKSATFFLTYVALKFFIGYGLELSRIIPLII). The Cytoplasmic segment spans residues 530–554 (FHLKKKYLCKTEAEVKEAWYPGDLS). A helical membrane pass occupies residues 555 to 574 (YATRVPGDMLILTITFCYSV). A topological domain (extracellular) is located at residue isoleucine 575. The chain crosses the membrane as a helical span at residues 576–594 (APLILIFGITYFGLGWLVL). Residues 595-612 (RNQALKVYVPSYESYGRM) are Cytoplasmic-facing. Residues 613 to 636 (WPHIHQRILAALFLFQVVMFGYLG) form a helical membrane-spanning segment. Over 637–641 (AKTFF) the chain is Extracellular. A helical transmembrane segment spans residues 642 to 662 (YTALVIPLIITSLIFGYVCRQ). Residues 663–724 (KFYGGFEHTA…YQDFNAIAGV (62 aa)) are Cytoplasmic-facing.

Belongs to the CSC1 (TC 1.A.17) family. As to quaternary structure, homodimer.

The protein resides in the membrane. In terms of biological role, acts as a hyperosmolarity-gated non-selective cation channel that permeates Ca(2+) ions. Mechanosensitive ion channel that converts mechanical stimuli into a flow of ions: activated in response to membrane stretch. Not activated in response to membrane poke. This chain is Hyperosmolality-gated Ca2+ permeable channel 3.1, found in Arabidopsis thaliana (Mouse-ear cress).